The primary structure comprises 818 residues: Phosphoinositide phosphatase SAC3 (818 aa).

In terms of domain architecture, SAC spans 153 to 546 (LCMVDLTKDF…GDTLAHQYGG (394 aa)). Positions 426–459 (SLSSSSDADTGDISPHTSSDDDNGDHDSLEKKSS) are disordered. Positions 482–493 (RTNCIDCLDRTN) match the Phosphatase catalytic core motif. Polar residues predominate over residues 759–780 (LTAETSSTENSVNGVGQSAPTI). Residues 759-800 (LTAETSSTENSVNGVGQSAPTISESGSSSSKGKEPMGTKIRE) form a disordered region. The segment covering 789-800 (KGKEPMGTKIRE) has biased composition (basic and acidic residues).

In terms of assembly, component of the PI(3,5)P2 regulatory complex at least composed of ATG18, SAC/FIG4, FAB1 and VAC14. It depends on Mg(2+) as a cofactor. As to expression, ubiquitous with a higher level of expression in young seedlings than in other tissues.

The protein resides in the vacuole membrane. The enzyme catalyses a 1,2-diacyl-sn-glycero-3-phospho-(1D-myo-inositol-3,5-bisphosphate) + H2O = a 1,2-diacyl-sn-glycero-3-phospho-(1D-myo-inositol-3-phosphate) + phosphate. Functionally, the PI(3,5)P2 regulatory complex regulates both the synthesis and turnover of phosphatidylinositol 3,5-bisphosphate (PtdIns(3,5)P2). The protein is Phosphoinositide phosphatase SAC3 (SAC3) of Arabidopsis thaliana (Mouse-ear cress).